The chain runs to 660 residues: Bifunctional polymyxin resistance protein ArnA (660 aa).

A formyltransferase ArnAFT region spans residues 1-304 (MKAVIFAYHD…TLGLVAGARL (304 aa)). The active-site Proton donor; for formyltransferase activity is histidine 104. Residues arginine 114 and 136–140 (VKRAD) each bind (6R)-10-formyltetrahydrofolate. A dehydrogenase ArnADH region spans residues 314–660 (RRIRVLILGV…RSVDIAERAS (347 aa)). NAD(+) contacts are provided by residues aspartate 347 and 368-369 (DI). UDP-alpha-D-glucuronate contacts are provided by residues alanine 393, tyrosine 398, and 432–433 (TS). Glutamate 434 (proton acceptor; for decarboxylase activity) is an active-site residue. Residues arginine 460, asparagine 492, 526–535 (KLIDGGQQKR), and tyrosine 613 contribute to the UDP-alpha-D-glucuronate site. Arginine 619 functions as the Proton donor; for decarboxylase activity in the catalytic mechanism.

The protein in the N-terminal section; belongs to the Fmt family. UDP-L-Ara4N formyltransferase subfamily. This sequence in the C-terminal section; belongs to the NAD(P)-dependent epimerase/dehydratase family. UDP-glucuronic acid decarboxylase subfamily. As to quaternary structure, homohexamer, formed by a dimer of trimers.

The catalysed reaction is UDP-alpha-D-glucuronate + NAD(+) = UDP-beta-L-threo-pentopyranos-4-ulose + CO2 + NADH. It carries out the reaction UDP-4-amino-4-deoxy-beta-L-arabinose + (6R)-10-formyltetrahydrofolate = UDP-4-deoxy-4-formamido-beta-L-arabinose + (6S)-5,6,7,8-tetrahydrofolate + H(+). Its pathway is nucleotide-sugar biosynthesis; UDP-4-deoxy-4-formamido-beta-L-arabinose biosynthesis; UDP-4-deoxy-4-formamido-beta-L-arabinose from UDP-alpha-D-glucuronate: step 1/3. It functions in the pathway nucleotide-sugar biosynthesis; UDP-4-deoxy-4-formamido-beta-L-arabinose biosynthesis; UDP-4-deoxy-4-formamido-beta-L-arabinose from UDP-alpha-D-glucuronate: step 3/3. The protein operates within bacterial outer membrane biogenesis; lipopolysaccharide biosynthesis. Bifunctional enzyme that catalyzes the oxidative decarboxylation of UDP-glucuronic acid (UDP-GlcUA) to UDP-4-keto-arabinose (UDP-Ara4O) and the addition of a formyl group to UDP-4-amino-4-deoxy-L-arabinose (UDP-L-Ara4N) to form UDP-L-4-formamido-arabinose (UDP-L-Ara4FN). The modified arabinose is attached to lipid A and is required for resistance to polymyxin and cationic antimicrobial peptides. In Salmonella typhimurium (strain LT2 / SGSC1412 / ATCC 700720), this protein is Bifunctional polymyxin resistance protein ArnA (arnA).